Here is a 473-residue protein sequence, read N- to C-terminus: MPTHLVWFRRDLRLQDNLALAAACRDASARVLALYISTPAQWQAHDMAPRQAAFISAQLNALQTALAEKGIPLLFHEVADFNASIETVKNVCRQHDVSHLFYNYQYEFNERQRDAAVEKTLPSVICEGFDDSVILAPGAVMTGNHEMYKVFTPFKNAWLKRLKEDIPPCVPAPKIRVSGALSTPLTPVSLNYPQQAFDAALFPVEENAVIAQLRQFCAQGADEYALRRDFPAVDGTSRLSASLATGGLSPRQCLHRLLAEQPQALDGGPGSVWLNELIWREFYRHLMTWYPALCKHQPFIRWTKRVAWQENPHYFQAWQKGETGYPIVDAAMRQLNATGWMHNRLRMITASFLVKDLLIDWRLGERYFMSQLIDGDLAANNGGWQWAASTGTDAAPYFRIFNPTTQGERFDRDGEFIRQWLPALRDIPGKAIHEPWRWAEKAGVVLDYPRPIVEHKQARIATLSAYEAARKGA.

Residues 2 to 134 (PTHLVWFRRD…ICEGFDDSVI (133 aa)) enclose the Photolyase/cryptochrome alpha/beta domain. (6R)-5,10-methylene-5,6,7,8-tetrahydrofolate contacts are provided by N109 and E110. Residue Y224 coordinates FAD. R228 lines the DNA pocket. Residue 236–240 (TSRLS) coordinates FAD. Interaction with DNA stretches follow at residues 276 to 283 (ELIWREFY) and 343 to 344 (NR). Position 374-376 (374-376 (DGD)) interacts with FAD. Q406 is a DNA binding site.

This sequence belongs to the DNA photolyase class-1 family. Monomer. Requires FAD as cofactor. (6R)-5,10-methylene-5,6,7,8-tetrahydrofolate is required as a cofactor.

It catalyses the reaction cyclobutadipyrimidine (in DNA) = 2 pyrimidine residues (in DNA).. In terms of biological role, involved in repair of UV radiation-induced DNA damage. Catalyzes the light-dependent monomerization (300-600 nm) of cyclobutyl pyrimidine dimers (in cis-syn configuration), which are formed between adjacent bases on the same DNA strand upon exposure to ultraviolet radiation. The protein is Deoxyribodipyrimidine photo-lyase (phrB) of Salmonella typhimurium (strain LT2 / SGSC1412 / ATCC 700720).